The following is a 337-amino-acid chain: Visual pigment-like receptor peropsin (337 aa).

The Extracellular segment spans residues 1-26; it reads MLRNNLGNSSDSKNEDGSVFSQTEHN. N-linked (GlcNAc...) asparagine glycosylation is present at N8. Residues 27 to 49 traverse the membrane as a helical segment; that stretch reads IVATYLIMAGMISIISNIIVLGI. Residues 50 to 61 are Cytoplasmic-facing; the sequence is FIKYKELRTPTN. Residues 62-87 traverse the membrane as a helical segment; sequence AIIINLAVTDIGVSSIGYPMSAASDL. Topologically, residues 88–101 are extracellular; sequence YGSWKFGYAGCQVY. C98 and C175 form a disulfide bridge. The chain crosses the membrane as a helical span at residues 102–121; the sequence is AGLNIFFGMASIGLLTVVAV. Over 122–140 the chain is Cytoplasmic; sequence DRYLTICLPDVGRRMTTNT. A helical membrane pass occupies residues 141 to 164; it reads YIGLILGAWINGLFWALMPIIGWA. Residues 165-188 lie on the Extracellular side of the membrane; that stretch reads SYAPDPTGATCTINWRKNDRSFVS. The helical transmembrane segment at 189–212 threads the bilayer; the sequence is YTMTVIAINFIVPLTVMFYCYYHV. The Cytoplasmic portion of the chain corresponds to 213–240; it reads TLSIKHHTTSDCTESLNRDWSDQIDVTK. Residues 241-264 traverse the membrane as a helical segment; sequence MSVIMICMFLVAWSPYSIVCLWAS. Over 265 to 272 the chain is Extracellular; that stretch reads FGDPKKIP. A helical transmembrane segment spans residues 273 to 297; it reads PPMAIIAPLFAKSSTFYNPCIYVVA. K284 is modified (N6-(retinylidene)lysine). Over 298 to 337 the chain is Cytoplasmic; it reads NKKFRRAMLAMFKCQTHQTMPVTSILPMDVSQNPLASGRI.

This sequence belongs to the G-protein coupled receptor 1 family. Opsin subfamily. Found only in the eye, where it is localized to the retinal pigment epithelium (RPE). In the RPE, it is localized to the microvilli that surround the photoreceptor outer segments.

It is found in the membrane. Functionally, may play a role in rpe physiology either by detecting light directly or by monitoring the concentration of retinoids or other photoreceptor-derived compounds. This Homo sapiens (Human) protein is Visual pigment-like receptor peropsin (RRH).